Reading from the N-terminus, the 282-residue chain is Large ribosomal subunit protein uL2 (282 aa).

Positions 215–282 are disordered; that stretch reads RHKGIRPTVR…IIRSRKETKK (68 aa). Over residues 263-282 the composition is skewed to basic residues; it reads RNPKKPSTKLIIRSRKETKK.

The protein belongs to the universal ribosomal protein uL2 family. As to quaternary structure, part of the 50S ribosomal subunit. Forms a bridge to the 30S subunit in the 70S ribosome.

Functionally, one of the primary rRNA binding proteins. Required for association of the 30S and 50S subunits to form the 70S ribosome, for tRNA binding and peptide bond formation. It has been suggested to have peptidyltransferase activity; this is somewhat controversial. Makes several contacts with the 16S rRNA in the 70S ribosome. In Mesomycoplasma hyopneumoniae (strain J / ATCC 25934 / NCTC 10110) (Mycoplasma hyopneumoniae), this protein is Large ribosomal subunit protein uL2.